Here is an 84-residue protein sequence, read N- to C-terminus: MALSVLRLALLLLAVTFAASLIPQFGLFSKYRTPNCSQYRLPGCPRHFNPVCGSDMSTYANECTLCMKIREGGHNIKIIRNGPC.

Residues M1–P23 form the signal peptide. Q24 carries the pyrrolidone carboxylic acid modification. A Kazal-like domain is found at K30–C84. 3 cysteine pairs are disulfide-bonded: C36–C66, C44–C63, and C52–C84.

In terms of tissue distribution, expressed in epididymis (at protein level).

The protein localises to the secreted. It is found in the cytoplasmic vesicle. Its subcellular location is the secretory vesicle. It localises to the acrosome. As a strong inhibitor of acrosin, it is required for normal spermiogenesis. It probably hinders premature activation of proacrosin and other proteases, thus preventing the cascade of events leading to spermiogenesis defects. May be involved in the regulation of serine protease-dependent germ cell apoptosis. It also inhibits trypsin. This is Serine protease inhibitor Kazal-type 2 (SPINK2) from Homo sapiens (Human).